The chain runs to 70 residues: Large ribosomal subunit protein bL31c (70 aa).

It belongs to the bacterial ribosomal protein bL31 family. Type A subfamily. As to quaternary structure, part of the 50S ribosomal subunit.

It localises to the plastid. Its subcellular location is the chloroplast. Its function is as follows. Binds the 23S rRNA. This chain is Large ribosomal subunit protein bL31c, found in Pyropia yezoensis (Susabi-nori).